A 573-amino-acid chain; its full sequence is Zinc finger protein 10 (573 aa).

The 72-residue stretch at 14–85 (VTFKDVFVDF…EREIHQETHP (72 aa)) folds into the KRAB domain. The C2H2-type 1; atypical zinc finger occupies 206–232 (DSCASNSNECGQTFCQNIHLIQFARTH). 9 C2H2-type zinc fingers span residues 265–287 (YECK…QLIH), 293–315 (YECK…QKTH), 321–343 (YECK…QRTH), 349–371 (YTCN…QRTH), 377–399 (YECP…QRTH), 405–427 (YECN…HRIH), 433–455 (FECK…QRTH), 461–483 (YECH…QRIH), and 489–511 (YECC…QRIH). A C2H2-type 11; atypical zinc finger spans residues 517–539 (YKCNQCGIIFSQNSPFIVHQIAH).

It belongs to the krueppel C2H2-type zinc-finger protein family. In terms of assembly, interacts (via the KRAB domain) with TRIM28 (via the RBCC domain).

The protein resides in the nucleus. May be involved in transcriptional regulation. The chain is Zinc finger protein 10 (ZNF10) from Homo sapiens (Human).